We begin with the raw amino-acid sequence, 1256 residues long: Pullulanase A (1256 aa).

The first 44 residues, 1-44, serve as a signal peptide directing secretion; that stretch reads MRKTPSHTEKKMVYSIRSLKNGTGSVLIGASLVLLAMATPTISS. The disordered stretch occupies residues 42–117; the sequence is ISSDESTPTT…VTTETKAEEP (76 aa). Residues 48–61 show a composition bias toward low complexity; the sequence is TPTTNEPNNRNTTT. Residues 79-90 show a composition bias toward polar residues; the sequence is DISSPRNANASL. Over residues 99 to 111 the composition is skewed to low complexity; that stretch reads TEPTTSTSPVTTE. Residues 141 to 143, Trp153, Asp199, 248 to 250, Trp261, Lys303, and Asn308 contribute to the substrate site; these read WTW and WYW. Ser646 and Tyr648 together coordinate Ca(2+). Residues 652-653 and Phe728 each bind substrate; that span reads YD. The active-site Nucleophile is the Asp763. The active-site Proton donor is the Glu792. Residue Trp794 coordinates substrate. Ca(2+) is bound by residues Met813, Thr816, and Asp817. The substrate site is built by Asp824, Arg827, and Tyr834. Ca(2+) contacts are provided by Asp867 and Asp871. Substrate-binding positions include Asn881, Lys954, and 974-976; that span reads DSY. Asp977 contacts Ca(2+). Residues 1126 to 1224 are disordered; sequence SQNGTSHEST…TPDRQAELPN (99 aa). The span at 1134-1172 shows a compositional bias: basic and acidic residues; it reads STAEEKPDSTPSKPEHQDPAPEARPDSTKPDAKVADAEN. Over residues 1181–1194 the composition is skewed to low complexity; the sequence is SQAEQPAQEAQASS. Residues 1200–1210 are compositionally biased toward polar residues; sequence QNESVENSSKK. The LPXTG sorting signal motif lies at 1222-1226; sequence LPNTG. The residue at position 1225 (Thr1225) is a Pentaglycyl murein peptidoglycan amidated threonine. Residues 1226-1256 constitute a propeptide, removed by sortase; the sequence is GIKNENKLLFAGISLLALLGLGFLLKNKKEN.

The protein belongs to the glycosyl hydrolase 13 family.

The protein localises to the secreted. Its subcellular location is the cell wall. It is found in the cell surface. The enzyme catalyses Hydrolysis of (1-&gt;6)-alpha-D-glucosidic linkages in pullulan, amylopectin and glycogen, and in the alpha- and beta-limit dextrins of amylopectin and glycogen.. Inhibited by 4-O-alpha-D-glucopyranosylmoranoline (G1M). Its function is as follows. Virulence factor. Involved in the degradation of glycogen of the mammalian host cells. Hydrolyzes the alpha-1,6-branchpoints of glycogen. Hydrolyzes pullulan. Does not hydrolyze dextran. Binds to mouse lung alveolar type II cells that are rich in glycogen stores. Is an alpha-glucan-specific carbohydrate-binding protein, which binds to amylose (pure alpha-(1,4)-linked glucose), amylopectin (alpha-(1,4)-linked glucose with alpha-(1,6) branch points), pullulan (linear polymer of mixed alpha-(1,4)- and alpha-(1,6)-linked glucose) and glycogen (similar to amylopectin with more frequent alpha-(1,6) branch points) in vitro. Does not bind to dextran (a linear polymer of alpha-(1,6)-linked glucose). This is Pullulanase A from Streptococcus pneumoniae serotype 2 (strain D39 / NCTC 7466).